The chain runs to 207 residues: Imidazole glycerol phosphate synthase subunit HisH (207 aa).

The Glutamine amidotransferase type-1 domain maps to 1–207; the sequence is MIGIIDYGMG…KRFGQLVEGN (207 aa). Cysteine 79 (nucleophile) is an active-site residue. Catalysis depends on residues histidine 185 and glutamate 187.

Heterodimer of HisH and HisF.

The protein resides in the cytoplasm. The catalysed reaction is 5-[(5-phospho-1-deoxy-D-ribulos-1-ylimino)methylamino]-1-(5-phospho-beta-D-ribosyl)imidazole-4-carboxamide + L-glutamine = D-erythro-1-(imidazol-4-yl)glycerol 3-phosphate + 5-amino-1-(5-phospho-beta-D-ribosyl)imidazole-4-carboxamide + L-glutamate + H(+). It carries out the reaction L-glutamine + H2O = L-glutamate + NH4(+). Its pathway is amino-acid biosynthesis; L-histidine biosynthesis; L-histidine from 5-phospho-alpha-D-ribose 1-diphosphate: step 5/9. In terms of biological role, IGPS catalyzes the conversion of PRFAR and glutamine to IGP, AICAR and glutamate. The HisH subunit catalyzes the hydrolysis of glutamine to glutamate and ammonia as part of the synthesis of IGP and AICAR. The resulting ammonia molecule is channeled to the active site of HisF. This Shouchella clausii (strain KSM-K16) (Alkalihalobacillus clausii) protein is Imidazole glycerol phosphate synthase subunit HisH.